The following is a 404-amino-acid chain: GID complex subunit 9 (404 aa).

The region spanning 116–148 (SRVRLNRLVADYMMANGYHGAAALLCKDSQLEN) is the LisH domain. One can recognise a CTLH domain in the interval 154–211 (IYKRYQLIHDSILQQELKEVLSWCSEHRAILKKNNSTLELEVRLQRFIELIKSKKLCQ). The segment at 317–389 (CPVCTPCLND…REGFLRDPYS (73 aa)) adopts an RING-Gid-type zinc-finger fold.

The protein belongs to the FYV10 family. As to quaternary structure, identified in the GID/CTLH complex. In the absence of stress, the complex exists as an inactive anticipatory complex (GID(Ant)), composed of Gid1, the E3 ubiquitin-ligase Gid2, Gid5, Gid8, and the RING-like subunit Gid9, awaiting a substrate receptor to form the active E3 ligase complex. When cells are shifted to glucose-containing medium, the substrate receptor Gid4 is induced and becomes part of the complex, named GID(SR4). Additionally, Gid7 transforms the GID(SR4) E3 ligase core into a higher-order supramolecular assembly (Chelator-GID(SR4)). Under osmotic or heat stress, the substrate receptor Gid10 is induced and becomes part of the complex, named GID(SR10).

Its subcellular location is the cytoplasm. The protein resides in the nucleus. It carries out the reaction S-ubiquitinyl-[E2 ubiquitin-conjugating enzyme]-L-cysteine + [acceptor protein]-L-lysine = [E2 ubiquitin-conjugating enzyme]-L-cysteine + N(6)-ubiquitinyl-[acceptor protein]-L-lysine.. It functions in the pathway protein modification; protein ubiquitination. Functionally, component of the GID E3 ligase complex recruiting N termini and catalyzing ubiquitination of proteins targeted for degradation. GID E3 is regulated through assembly with interchangeable N-degron-binding substrate receptors induced by distinct environmental perturbations. Required for the adaptation to the presence of glucose in the growth medium; mediates in association with the substrate receptor VID24/GID4 the degradation of enzymes involved in gluconeogenesis when cells are shifted to glucose-containing medium. This is GID complex subunit 9 (gid9) from Schizosaccharomyces pombe (strain 972 / ATCC 24843) (Fission yeast).